The following is a 320-amino-acid chain: Baseplate tail-tube junction protein gp54 (320 aa).

As to quaternary structure, homohexamer. The tube second annulus is composed of a gp54 hexameric ring. Interacts with the tail tube protein gp19. Interacts with the first layer of sheath proteins gp18. Part of the baseplate macromolecular complex which consists of gp5, gp5.4, gp27 (central spike complex); gp6, gp25, gp53 (inner baseplate); gp7, gp8 (intermediate baseplate); gp9, gp10, gp11, gp12 (peripheral); gp48 and gp54 (proximal region of the tail tube).

It localises to the virion. Its function is as follows. Baseplate protein that forms, together with gp48, the baseplate-tail tube junction. The tail tube first 2 annuli are formed by gp48 and gp54, which are in continuation of the spike complex. Involved in the tail assembly. Morphogenesis of the baseplate is completed by association of gp48 and gp54, which bind the upper part of the baseplate dome to form the platform for polymerization of the tail tube. The protein is Baseplate tail-tube junction protein gp54 (54) of Escherichia coli (Bacteriophage T4).